We begin with the raw amino-acid sequence, 479 residues long: Cardiolipin synthase A (479 aa).

Transmembrane regions (helical) follow at residues 8-28 (FFGY…LHAV) and 38-58 (IAWA…YLVF). PLD phosphodiesterase domains follow at residues 218-245 (VNFR…GDEY) and 392-419 (QPGF…DNRS). Catalysis depends on residues His223, Lys225, Asp230, His397, Lys399, and Asp404.

The protein belongs to the phospholipase D family. Cardiolipin synthase subfamily. ClsA sub-subfamily.

The protein resides in the cell inner membrane. The catalysed reaction is 2 a 1,2-diacyl-sn-glycero-3-phospho-(1'-sn-glycerol) = a cardiolipin + glycerol. Functionally, catalyzes the reversible phosphatidyl group transfer from one phosphatidylglycerol molecule to another to form cardiolipin (CL) (diphosphatidylglycerol) and glycerol. The protein is Cardiolipin synthase A of Pseudomonas putida (strain GB-1).